The chain runs to 149 residues: Oocyte-expressed protein homolog (149 aa).

Residues 1 to 22 form a disordered region; it reads MVDDAGAAESQRGKQTPAHSLE. In terms of domain architecture, KH; atypical spans 49–110; sequence PLVFYLEAWL…RVQNRVKSML (62 aa).

It belongs to the KHDC1 family. As to quaternary structure, component of the subcortical maternal complex (SCMC), at least composed of NLRP5, KHDC3L, OOEP, and TLE6 isoform 1. Within the complex, interacts with NLRP5, KHDC3L and TLE6 isoform 1. As part of the SCMC interacts with the SCMC-associated protein NLRP4F. The SCMC may facilitate translocation of its components between the nuclear and cytoplasmic compartments. Forms a scaffold complex with KHDC3L/FILIA, and interacts with BLM and TRIM25 at DNA replication forks.

Its subcellular location is the cytoplasm. The protein localises to the nucleus. In terms of biological role, component of the subcortical maternal complex (SCMC), a multiprotein complex that plays a key role in early embryonic development. The SCMC complex is a structural constituent of cytoplasmic lattices, which consist in fibrous structures found in the cytoplasm of oocytes and preimplantation embryos. They are required to store maternal proteins critical for embryonic development, such as proteins that control epigenetic reprogramming of the preimplantation embryo, and prevent their degradation or activation. As part of the OOEP-KHDC3 scaffold, recruits BLM and TRIM25 to DNA replication forks, thereby promoting the ubiquitination of BLM by TRIM25, enhancing BLM retainment at replication forks and therefore promoting stalled replication fork restart. Positively regulates the homologous recombination-mediated DNA double-strand break (DSB) repair pathway by regulating ATM activation and RAD51 recruitment to DSBs in oocytes. Thereby contributes to oocyte survival and the resumption and completion of meiosis. The polypeptide is Oocyte-expressed protein homolog (Homo sapiens (Human)).